Consider the following 180-residue polypeptide: Signal peptidase complex subunit 3 (180 aa).

Topologically, residues 1 to 12 (MHNLLSRANSLL) are cytoplasmic. The chain crosses the membrane as a helical; Signal-anchor for type II membrane protein span at residues 13-33 (AFTLWVMAAVTAACFLSTVFL). Residues 34–180 (DYTVSNHLEV…PTTYTTTRRS (147 aa)) lie on the Lumenal side of the membrane. The N-linked (GlcNAc...) asparagine glycan is linked to Asn141.

It belongs to the SPCS3 family. Component of the signal peptidase complex (SPC) composed of a catalytic subunit sec-11 and three accessory subunits spcs-1, spcs-2 and spcs-3. The complex induces a local thinning of the ER membrane which is used to measure the length of the signal peptide (SP) h-region of protein substrates. This ensures the selectivity of the complex towards h-regions shorter than 18-20 amino acids.

The protein resides in the endoplasmic reticulum membrane. Functionally, essential component of the signal peptidase complex (SPC) which catalyzes the cleavage of N-terminal signal sequences from nascent proteins as they are translocated into the lumen of the endoplasmic reticulum. Essential for the SPC catalytic activity, possibly by stabilizing and positioning the active center of the complex close to the lumenal surface. The protein is Signal peptidase complex subunit 3 of Caenorhabditis briggsae.